A 499-amino-acid polypeptide reads, in one-letter code: Probable cytosol aminopeptidase (499 aa).

Residues Lys-264 and Asp-269 each contribute to the Mn(2+) site. The active site involves Lys-276. Residues Asp-287, Asp-346, and Glu-348 each contribute to the Mn(2+) site. The active site involves Arg-350.

Belongs to the peptidase M17 family. It depends on Mn(2+) as a cofactor.

The protein localises to the cytoplasm. It carries out the reaction Release of an N-terminal amino acid, Xaa-|-Yaa-, in which Xaa is preferably Leu, but may be other amino acids including Pro although not Arg or Lys, and Yaa may be Pro. Amino acid amides and methyl esters are also readily hydrolyzed, but rates on arylamides are exceedingly low.. The catalysed reaction is Release of an N-terminal amino acid, preferentially leucine, but not glutamic or aspartic acids.. In terms of biological role, presumably involved in the processing and regular turnover of intracellular proteins. Catalyzes the removal of unsubstituted N-terminal amino acids from various peptides. The sequence is that of Probable cytosol aminopeptidase from Rhodopseudomonas palustris (strain BisB18).